The chain runs to 101 residues: Small ribosomal subunit protein uS14 (101 aa).

The span at 1-11 (MAKKSSVEKNN) shows a compositional bias: basic and acidic residues. The disordered stretch occupies residues 1 to 22 (MAKKSSVEKNNRRQRMVKNAAA). Basic residues predominate over residues 12 to 22 (RRQRMVKNAAA).

It belongs to the universal ribosomal protein uS14 family. As to quaternary structure, part of the 30S ribosomal subunit. Contacts proteins S3 and S10.

Binds 16S rRNA, required for the assembly of 30S particles and may also be responsible for determining the conformation of the 16S rRNA at the A site. This Afipia carboxidovorans (strain ATCC 49405 / DSM 1227 / KCTC 32145 / OM5) (Oligotropha carboxidovorans) protein is Small ribosomal subunit protein uS14.